The chain runs to 367 residues: Phosphoribosylaminoimidazole-succinocarboxamide synthase (367 aa).

The protein belongs to the SAICAR synthetase family.

It catalyses the reaction 5-amino-1-(5-phospho-D-ribosyl)imidazole-4-carboxylate + L-aspartate + ATP = (2S)-2-[5-amino-1-(5-phospho-beta-D-ribosyl)imidazole-4-carboxamido]succinate + ADP + phosphate + 2 H(+). The protein operates within purine metabolism; IMP biosynthesis via de novo pathway; 5-amino-1-(5-phospho-D-ribosyl)imidazole-4-carboxamide from 5-amino-1-(5-phospho-D-ribosyl)imidazole-4-carboxylate: step 1/2. This Shewanella oneidensis (strain ATCC 700550 / JCM 31522 / CIP 106686 / LMG 19005 / NCIMB 14063 / MR-1) protein is Phosphoribosylaminoimidazole-succinocarboxamide synthase.